Consider the following 677-residue polypeptide: Methionine--tRNA ligase (677 aa).

The 'HIGH' region motif lies at 15 to 25 (PYANGSIHLGH). Cys146, Cys149, Cys159, and Cys162 together coordinate Zn(2+). The 'KMSKS' region motif lies at 333-337 (KMSKS). Lys336 contributes to the ATP binding site. One can recognise a tRNA-binding domain in the interval 575 to 677 (DFAKVDLRVA…AGAKPGHQVK (103 aa)).

The protein belongs to the class-I aminoacyl-tRNA synthetase family. MetG type 1 subfamily. In terms of assembly, homodimer. Zn(2+) is required as a cofactor.

It localises to the cytoplasm. The enzyme catalyses tRNA(Met) + L-methionine + ATP = L-methionyl-tRNA(Met) + AMP + diphosphate. In terms of biological role, is required not only for elongation of protein synthesis but also for the initiation of all mRNA translation through initiator tRNA(fMet) aminoacylation. The chain is Methionine--tRNA ligase from Escherichia coli (strain ATCC 8739 / DSM 1576 / NBRC 3972 / NCIMB 8545 / WDCM 00012 / Crooks).